Here is a 158-residue protein sequence, read N- to C-terminus: UPF0260 protein RHE_CH01262 (158 aa).

This sequence belongs to the UPF0260 family.

This chain is UPF0260 protein RHE_CH01262, found in Rhizobium etli (strain ATCC 51251 / DSM 11541 / JCM 21823 / NBRC 15573 / CFN 42).